A 343-amino-acid polypeptide reads, in one-letter code: Mitochondrial distribution and morphology protein 34 (343 aa).

The region spanning 1 to 196 (MSFVFPSWST…LPGIIHRLSQ (196 aa)) is the SMP-LTD domain. Disordered regions lie at residues 227–255 (EVEE…IGPG) and 300–325 (GAGT…KAKR). Positions 306 to 317 (SGRASLASSSVG) are enriched in low complexity.

The protein belongs to the MDM34 family. Component of the ER-mitochondria encounter structure (ERMES) or MDM complex, composed of MMM1, MDM10, MDM12 and MDM34.

It localises to the mitochondrion outer membrane. Component of the ERMES/MDM complex, which serves as a molecular tether to connect the endoplasmic reticulum (ER) and mitochondria. Components of this complex are involved in the control of mitochondrial shape and protein biogenesis, and function in nonvesicular lipid trafficking between the ER and mitochondria. MDM34 is required for the interaction of the ER-resident membrane protein MMM1 and the outer mitochondrial membrane-resident beta-barrel protein MDM10. The chain is Mitochondrial distribution and morphology protein 34 from Cryptococcus neoformans var. neoformans serotype D (strain B-3501A) (Filobasidiella neoformans).